The primary structure comprises 187 residues: Cytochrome b-245 chaperone 1 (187 aa).

The chain crosses the membrane as a helical span at residues 20–42 (GIRSWSLLVGILSIGLAAAYYSG). Position 168 is a phosphoserine (Ser168).

It belongs to the CYBC1 family. Interacts with CYBB; CYBC1 may act as a chaperone stabilizing Cytochrome b-245 heterodimer. Highly expressed in macrophages, neutrophils and monocytes.

The protein localises to the endoplasmic reticulum membrane. Its function is as follows. Functions as a chaperone necessary for a stable expression of the CYBA and CYBB subunits of the cytochrome b-245 heterodimer. Controls the phagocyte respiratory burst and is essential for innate immunity. The polypeptide is Cytochrome b-245 chaperone 1 (Homo sapiens (Human)).